A 232-amino-acid polypeptide reads, in one-letter code: uncharacterized protein (232 aa).

The helical transmembrane segment at 209–229 threads the bilayer; that stretch reads ATISTPALGYAYFLFTLTLVF.

It is found in the host membrane. This is an uncharacterized protein from Saccharolobus islandicus (Sulfolobus islandicus).